The sequence spans 128 residues: MIAKSSSKKKSKKVITDGIAHIHATFNNTIVMITDRHGNTVCWATSGGSGFRGSRKSTPFAAQVAAGSCGEKALAFGMKNLEVHVKGPGPGRDSAIRGLNAQGLKIQSITDVTPIPHNGCRPSKKRRV.

Belongs to the universal ribosomal protein uS11 family. In terms of assembly, part of the 30S ribosomal subunit. Interacts with proteins S7 and S18. Binds to IF-3.

Its function is as follows. Located on the platform of the 30S subunit, it bridges several disparate RNA helices of the 16S rRNA. Forms part of the Shine-Dalgarno cleft in the 70S ribosome. The protein is Small ribosomal subunit protein uS11 of Vesicomyosocius okutanii subsp. Calyptogena okutanii (strain HA).